A 368-amino-acid polypeptide reads, in one-letter code: MLIPLARAVLALALLGAGAAHAERLKDLASIQGVRGNQLIGYGLVVGLDGSGDQVRQTPFTQQSLTNMLSQLGITVPQGSNMQLKNVAAVMVTATLPSFARPGQTVDVVVSSMGNAKSLRGGTLLMTPLKGADNQVYAIAQGNLLVGGAGASAGGSSVQINQLNGGRISNGAIVERAVPTMYAQDGTVYLEMNNTDFGTTQNAAAAINRQFGAGTAMALDGRVIQVRGPLDPSMMPAFMSQVENLQVARAPATAKVIINARTGSVVMNRTVMIEEAAVAHGNLSVIINRQNQVFQPDTPFTEGQTVVVPNTQIEVRQDGGALQRVTTSANLADVVKALNALGATPQDLLAILQAMKTAGALRADLEII.

The first 22 residues, 1 to 22 (MLIPLARAVLALALLGAGAAHA), serve as a signal peptide directing secretion.

Belongs to the FlgI family. The basal body constitutes a major portion of the flagellar organelle and consists of four rings (L,P,S, and M) mounted on a central rod.

The protein resides in the periplasm. The protein localises to the bacterial flagellum basal body. Assembles around the rod to form the L-ring and probably protects the motor/basal body from shearing forces during rotation. The protein is Flagellar P-ring protein of Bordetella bronchiseptica (strain ATCC BAA-588 / NCTC 13252 / RB50) (Alcaligenes bronchisepticus).